A 283-amino-acid chain; its full sequence is uncharacterized protein (283 aa).

Positions 1–23 (MFAFASFAISAIFFLCSFSYVSS) are cleaved as a signal peptide.

It is found in the secreted. This is an uncharacterized protein from Schizosaccharomyces pombe (strain 972 / ATCC 24843) (Fission yeast).